We begin with the raw amino-acid sequence, 106 residues long: COX assembly mitochondrial protein homolog (106 aa).

An N-acetylalanine modification is found at Ala2. A CHCH domain is found at 28-71 (RERCSEQVQDFTKCCKDSGVLMVVKCRKENSALKDCLTSYYKDP). Short sequence motifs (cx9C motif) lie at residues 31–41 (CSEQVQDFTKC) and 53–63 (CRKENSALKDC). Disulfide bonds link Cys31-Cys63 and Cys41-Cys53.

The protein belongs to the CMC family. In terms of assembly, component of the MITRAC (mitochondrial translation regulation assembly intermediate of cytochrome c oxidase complex) complex, the core components of this complex being COA3/MITRAC12 and COX14.

The protein localises to the mitochondrion. In terms of biological role, component of the MITRAC (mitochondrial translation regulation assembly intermediate of cytochrome c oxidase complex) complex, that regulates cytochrome c oxidase assembly. The protein is COX assembly mitochondrial protein homolog (CMC1) of Bos taurus (Bovine).